The following is a 521-amino-acid chain: Cytochrome b5 reductase 4 (521 aa).

Met-1 is subject to N-acetylmethionine. Over residues 1-18 (MLNVPSQSFPAPRSQQRV) the composition is skewed to polar residues. Residues 1–27 (MLNVPSQSFPAPRSQQRVASGGRSKVP) form a disordered region. In terms of domain architecture, Cytochrome b5 heme-binding spans 54–130 (LIEVTEEELK…LKECLVGRMA (77 aa)). Residues His-89 and His-112 each contribute to the heme site. The 92-residue stretch at 165 to 256 (PSYPSYDWFQ…KENTSWDFLG (92 aa)) folds into the CS domain. An FAD-binding FR-type domain is found at 273-385 (LYYRKCQLIS…SSPEGNFKIS (113 aa)). Residues 365 to 380 (DRLQ…SPEG) and 392 to 424 (DLFL…KVKL) each bind FAD.

This sequence belongs to the flavoprotein pyridine nucleotide cytochrome reductase family. The cofactor is FAD. In terms of tissue distribution, widely expressed.

Its subcellular location is the endoplasmic reticulum. It catalyses the reaction 2 Fe(III)-[cytochrome b5] + NADH = 2 Fe(II)-[cytochrome b5] + NAD(+) + H(+). Functionally, NADH-cytochrome b5 reductase involved in endoplasmic reticulum stress response pathway. Plays a critical role in protecting pancreatic beta-cells against oxidant stress, possibly by protecting the cell from excess buildup of reactive oxygen species (ROS). Reduces a variety of substrates in vitro, such as cytochrome c, feericyanide and methemoglobin. The chain is Cytochrome b5 reductase 4 from Homo sapiens (Human).